The sequence spans 351 residues: MFCLLGLRLLKYITFRTAYATIFAFLLALIFGPFIILRLKKLKLDQILRKDGPKRHLSEKIGIPTMGGILIFFCVLVSLFFWIDFWNIYFLIILFVMVSFACLGFMDDLLKIKRKNSDGLNPRFKIYGQILFSCISVTMLYYFGDEHVSIIYFPFFKSLKLDLGVLYIPFGMFILISASNSFNLTDGLDGLAIGLSIVVTGALVIIAYLASRVDFAFYLNIPNIKGAEELVVFLGALLGGSFGFLWFNAYPAKIMMGDTGSLSIGAVLGMTALILKSEILFAILAGVFVVETLSVIIQVVVYKHTKKRVFKMAPLHHHFEELGWSEMQVVIRFWIIGLIFAIIALSTLKIR.

The next 10 membrane-spanning stretches (helical) occupy residues 17 to 37 (TAYATIFAFLLALIFGPFIIL), 63 to 83 (IPTMGGILIFFCVLVSLFFWI), 85 to 105 (FWNIYFLIILFVMVSFACLGF), 124 to 144 (FKIYGQILFSCISVTMLYYFG), 158 to 178 (SLKLDLGVLYIPFGMFILISA), 190 to 210 (GLAIGLSIVVTGALVIIAYLA), 230 to 250 (LVVFLGALLGGSFGFLWFNAY), 254 to 274 (IMMGDTGSLSIGAVLGMTALI), 279 to 299 (ILFAILAGVFVVETLSVIIQV), and 328 to 348 (QVVIRFWIIGLIFAIIALSTL).

The protein belongs to the glycosyltransferase 4 family. MraY subfamily. It depends on Mg(2+) as a cofactor.

Its subcellular location is the cell inner membrane. The enzyme catalyses UDP-N-acetyl-alpha-D-muramoyl-L-alanyl-gamma-D-glutamyl-meso-2,6-diaminopimeloyl-D-alanyl-D-alanine + di-trans,octa-cis-undecaprenyl phosphate = di-trans,octa-cis-undecaprenyl diphospho-N-acetyl-alpha-D-muramoyl-L-alanyl-D-glutamyl-meso-2,6-diaminopimeloyl-D-alanyl-D-alanine + UMP. The protein operates within cell wall biogenesis; peptidoglycan biosynthesis. Its function is as follows. Catalyzes the initial step of the lipid cycle reactions in the biosynthesis of the cell wall peptidoglycan: transfers peptidoglycan precursor phospho-MurNAc-pentapeptide from UDP-MurNAc-pentapeptide onto the lipid carrier undecaprenyl phosphate, yielding undecaprenyl-pyrophosphoryl-MurNAc-pentapeptide, known as lipid I. This chain is Phospho-N-acetylmuramoyl-pentapeptide-transferase, found in Borrelia turicatae (strain 91E135).